The sequence spans 369 residues: GTPase Obg (369 aa).

Positions 1–159 (MKFVDEVTID…KNLKLELRVL (159 aa)) constitute an Obg domain. Residues 160–334 (ADVGLLGMPN…LIHAIYSHVA (175 aa)) form the OBG-type G domain. Residues 166–173 (GMPNAGKS), 191–195 (FTTLH), 213–216 (DIPG), 284–287 (NKLD), and 315–317 (SAL) contribute to the GTP site. Positions 173 and 193 each coordinate Mg(2+). A disordered region spans residues 339 to 369 (QPEEVPDPRFTTNEDLSEAAPAPDRDDPRFR).

This sequence belongs to the TRAFAC class OBG-HflX-like GTPase superfamily. OBG GTPase family. As to quaternary structure, monomer. Mg(2+) serves as cofactor.

The protein resides in the cytoplasm. An essential GTPase which binds GTP, GDP and possibly (p)ppGpp with moderate affinity, with high nucleotide exchange rates and a fairly low GTP hydrolysis rate. Plays a role in control of the cell cycle, stress response, ribosome biogenesis and in those bacteria that undergo differentiation, in morphogenesis control. In Leptothrix cholodnii (strain ATCC 51168 / LMG 8142 / SP-6) (Leptothrix discophora (strain SP-6)), this protein is GTPase Obg.